The following is a 257-amino-acid chain: Thiazole synthase (257 aa).

Catalysis depends on Lys-96, which acts as the Schiff-base intermediate with DXP. 1-deoxy-D-xylulose 5-phosphate-binding positions include Gly-157, 184–185, and 206–207; these read AG and NT.

Belongs to the ThiG family. In terms of assembly, homotetramer. Forms heterodimers with either ThiH or ThiS.

The protein localises to the cytoplasm. It carries out the reaction [ThiS sulfur-carrier protein]-C-terminal-Gly-aminoethanethioate + 2-iminoacetate + 1-deoxy-D-xylulose 5-phosphate = [ThiS sulfur-carrier protein]-C-terminal Gly-Gly + 2-[(2R,5Z)-2-carboxy-4-methylthiazol-5(2H)-ylidene]ethyl phosphate + 2 H2O + H(+). Its pathway is cofactor biosynthesis; thiamine diphosphate biosynthesis. Catalyzes the rearrangement of 1-deoxy-D-xylulose 5-phosphate (DXP) to produce the thiazole phosphate moiety of thiamine. Sulfur is provided by the thiocarboxylate moiety of the carrier protein ThiS. In vitro, sulfur can be provided by H(2)S. The chain is Thiazole synthase from Agrobacterium fabrum (strain C58 / ATCC 33970) (Agrobacterium tumefaciens (strain C58)).